The following is a 145-amino-acid chain: D-aminoacyl-tRNA deacylase (145 aa).

Positions Gly-137–Pro-138 match the Gly-cisPro motif, important for rejection of L-amino acids motif.

Belongs to the DTD family. In terms of assembly, homodimer.

It localises to the cytoplasm. It catalyses the reaction glycyl-tRNA(Ala) + H2O = tRNA(Ala) + glycine + H(+). The enzyme catalyses a D-aminoacyl-tRNA + H2O = a tRNA + a D-alpha-amino acid + H(+). An aminoacyl-tRNA editing enzyme that deacylates mischarged D-aminoacyl-tRNAs. Also deacylates mischarged glycyl-tRNA(Ala), protecting cells against glycine mischarging by AlaRS. Acts via tRNA-based rather than protein-based catalysis; rejects L-amino acids rather than detecting D-amino acids in the active site. By recycling D-aminoacyl-tRNA to D-amino acids and free tRNA molecules, this enzyme counteracts the toxicity associated with the formation of D-aminoacyl-tRNA entities in vivo and helps enforce protein L-homochirality. The sequence is that of D-aminoacyl-tRNA deacylase from Azotobacter vinelandii (strain DJ / ATCC BAA-1303).